The primary structure comprises 375 residues: Type II restriction enzyme ApaLI (375 aa).

It carries out the reaction Endonucleolytic cleavage of DNA to give specific double-stranded fragments with terminal 5'-phosphates.. A subtype P restriction enzyme that recognizes the double-stranded sequence 5'-GTGCAC-3' and cleaves after G-1. This is Type II restriction enzyme ApaLI from Acetobacter pasteurianus (Acetobacter turbidans).